Reading from the N-terminus, the 205-residue chain is GTP cyclohydrolase 1 (205 aa).

Zn(2+) contacts are provided by C95, H98, and C166.

This sequence belongs to the GTP cyclohydrolase I family. Toroid-shaped homodecamer, composed of two pentamers of five dimers.

It catalyses the reaction GTP + H2O = 7,8-dihydroneopterin 3'-triphosphate + formate + H(+). It functions in the pathway cofactor biosynthesis; 7,8-dihydroneopterin triphosphate biosynthesis; 7,8-dihydroneopterin triphosphate from GTP: step 1/1. This is GTP cyclohydrolase 1 from Maricaulis maris (strain MCS10) (Caulobacter maris).